Here is a 326-residue protein sequence, read N- to C-terminus: Ficolin-1 (326 aa).

The N-terminal stretch at 1–29 (MELSRVAVALGPTGQLLLFLSFQTLAAQA) is a signal peptide. The 39-residue stretch at 55 to 93 (GLPGAAGPKGEAGANGPKGERGSPGVVGKAGPAGPKGDR) folds into the Collagen-like domain. Low complexity-rich tracts occupy residues 61 to 71 (GPKGEAGANGP) and 78 to 89 (PGVVGKAGPAGP). The interval 61–110 (GPKGEAGANGPKGERGSPGVVGKAGPAGPKGDRGEKGARGEKGEPGQLQS) is disordered. The span at 90–104 (KGDRGEKGARGEKGE) shows a compositional bias: basic and acidic residues. The 218-residue stretch at 109-326 (QSCATGPRTC…QVSEMKVRLT (218 aa)) folds into the Fibrinogen C-terminal domain. 2 disulfide bridges follow: Cys-111–Cys-139 and Cys-118–Cys-146. The segment at 115–154 (PRTCKELLTRGHFLSGWHTIYLPDCQPLTVLCDMDTDGGG) is a domain; contributes to trimerization. Residues 155–243 (WTVFQRRSDG…LVLGGFLEGN (89 aa)) are b domain; contributes to trimerization. Ca(2+) contacts are provided by Asp-262 and Asp-264. The N-linked (GlcNAc...) asparagine glycan is linked to Asn-265. A disulfide bridge links Cys-270 with Cys-283. 282-284 (ACH) is an a carbohydrate binding site. Asn-313 is a glycosylation site (N-linked (GlcNAc...) asparagine). Residues 317–326 (QVSEMKVRLT) form a p domain region.

The protein belongs to the ficolin lectin family. Homotrimer. Interacts with elastin/ELN. Interacts (via Fibrinogen C-terminal domain) with FFAR2. Interacts with CRP; may regulate monocyte activation by FCN1. As to expression, most abundantly expressed in placenta and lung.

The protein resides in the secreted. It localises to the cell membrane. In terms of biological role, extracellular lectin functioning as a pattern-recognition receptor in innate immunity. Binds the sugar moieties of pathogen-associated molecular patterns (PAMPs) displayed on microbes and activates the lectin pathway of the complement system. May also activate monocytes through a G protein-coupled receptor, FFAR2, inducing the secretion of interleukin-8/IL-8. Binds preferentially to 9-O-acetylated 2-6-linked sialic acid derivatives and to various glycans containing sialic acid engaged in a 2-3 linkage. This is Ficolin-1 (FCN1) from Sus scrofa (Pig).